We begin with the raw amino-acid sequence, 184 residues long: Putative YfeABCD regulator YfeE (184 aa).

Transmembrane regions (helical) follow at residues 15–35 (IAGWLVFIPALLSTLISIINF), 84–104 (LSAGNIMFFIIYMLIFVGLSL), and 162–182 (ILPSVIGVLGYFVIKLLGIMI).

To E.coli YniB.

The protein resides in the cell membrane. Functionally, putative regulator of YfeABCD, an ABC transporter locus involved in inorganic iron transport. The sequence is that of Putative YfeABCD regulator YfeE (yfeE) from Yersinia pestis.